We begin with the raw amino-acid sequence, 495 residues long: Transmembrane protein 161A (495 aa).

Residues 1–28 (MALMGVQLVVSLLAVSIMQRMAPHLSFA) form the signal peptide. Topologically, residues 29–99 (RWLLCNGSLL…VNVMDALVLR (71 aa)) are extracellular. Asn34 is a glycosylation site (N-linked (GlcNAc...) asparagine). The chain crosses the membrane as a helical span at residues 100-120 (FFVEYQWLIDFAVYATGIYLF). Over 121-135 (TEGYYSVVDASKEVN) the chain is Cytoplasmic. The chain crosses the membrane as a helical span at residues 136-156 (IASIWCVLTVLFCLRTLYLLM). At 157–167 (SHYFLSEEGGE) the chain is on the extracellular side. A helical transmembrane segment spans residues 168-188 (RSVCLAFGFLSLLIAMLVLVV). Topologically, residues 189 to 227 (REDYLEFGLEPGFTSLFDNFEVFARKQGYEWSVPFTKLS) are cytoplasmic. The chain crosses the membrane as a helical span at residues 228-248 (VKLGLAVICAFIGALLAFPGL). Topologically, residues 249-265 (RLAQTHLDAVQMNADRP) are extracellular. A helical membrane pass occupies residues 266–286 (MIQILLHMSFLSPLVIIVMWI). Residues 287-305 (KPIARDFLGNAPMGKTSVT) lie on the Cytoplasmic side of the membrane. The helical transmembrane segment at 306-326 (LLSSSAFSSVRLWTIVVLCVL) threads the bilayer. The Extracellular segment spans residues 327–367 (RLLLTRYHLQAYLNLAQKWVEQMKKEAGRIAAIDIQRKVTR). A helical membrane pass occupies residues 368 to 388 (IFCYLTVVTLQYLIPILLVLF). The Cytoplasmic segment spans residues 389–465 (STLALKSLGD…ALLTPIFFRG (77 aa)). A helical transmembrane segment spans residues 466 to 486 (IFAFLTWWVAACQLISSLFGI). Residues 487-495 (YFHQYLMHN) are Extracellular-facing.

The protein belongs to the TMEM161 family.

The protein localises to the membrane. In terms of biological role, may play a role in protection against oxidative stress. This is Transmembrane protein 161A (tmem161a) from Danio rerio (Zebrafish).